The sequence spans 351 residues: uncharacterized protein (351 aa).

The signal sequence occupies residues 1-32 (MKNKKRVFIASSLSCVLLLLSAANTEANSANK). Residues 26 to 74 (EANSANKDSQDQTKKEHVDKAQQKEKRNVNDKDKNTPGPDDIGKNGKVT) are disordered. The segment covering 33–60 (DSQDQTKKEHVDKAQQKEKRNVNDKDKN) has biased composition (basic and acidic residues).

It belongs to the aerolysin family.

This is an uncharacterized protein from Staphylococcus aureus (strain MRSA252).